We begin with the raw amino-acid sequence, 660 residues long: MSQSFELVSQYKPQGDQPNAIRQLVAGINEGKKHQTLLGATGTGKTFTMSNVIQQVNKPTLVIAHNKTLAGQLYSEFKEFFPNNAVEYFVSYYDYYQPEAYVPQSDTYIEKDASINDEIDKLRHSATSALFERNDVIIVASVSCIYGLGSPEEYKELVCSLRTGMEIERNDLLRQLVDIQYDRNDVNFTRGTFRVRGDVVEIFPASRDEQCIRVEFFGDEIDRITEVDALTGEIKGERNHVAIFPASHFVTREEKLKRATKSIEAELEERLKELHDRGKLLEAQRLEQRTRYDLEMIHEMGFCSGIENYSRHLTLRKAGETPYTLLDFFPDDFLIIIDESHVTIPQIRAMYNGDQARKGVLVDHGFRLPSALDNRPLKFEEFEHKVHQAVFVSATPGPYELEHTPEMVEQIIRPTGLLDPVIEVRPIEGQIDDLIGEINERVAKNERVLVTTLTKKMAEDLTDYLKEVGIKVRYLHSEVKTLERIEIIRQLRLGTFNVLVGINLLREGLDIPEVSLVAILDADKEGFLRAERSLIQTIGRAARNANGYVIMYADRMTKSMQIAIDETKRRRSIQEEYNRKHGITPKTIEKRIPDVIKATAMVAEDGEEYTSHAPKQKMSKKEREAVIERMEAEMKEAAKTLNFERAAELRDLILELKAEG.

The Helicase ATP-binding domain occupies 26–413; that stretch reads AGINEGKKHQ…TPEMVEQIIR (388 aa). Residue 39–46 participates in ATP binding; the sequence is GATGTGKT. Residues 92 to 115 carry the Beta-hairpin motif; the sequence is YYDYYQPEAYVPQSDTYIEKDASI. One can recognise a Helicase C-terminal domain in the interval 430–592; the sequence is QIDDLIGEIN…ITPKTIEKRI (163 aa). Residues 624–659 form the UVR domain; that stretch reads EAVIERMEAEMKEAAKTLNFERAAELRDLILELKAE.

The protein belongs to the UvrB family. In terms of assembly, forms a heterotetramer with UvrA during the search for lesions. Interacts with UvrC in an incision complex.

Its subcellular location is the cytoplasm. The UvrABC repair system catalyzes the recognition and processing of DNA lesions. A damage recognition complex composed of 2 UvrA and 2 UvrB subunits scans DNA for abnormalities. Upon binding of the UvrA(2)B(2) complex to a putative damaged site, the DNA wraps around one UvrB monomer. DNA wrap is dependent on ATP binding by UvrB and probably causes local melting of the DNA helix, facilitating insertion of UvrB beta-hairpin between the DNA strands. Then UvrB probes one DNA strand for the presence of a lesion. If a lesion is found the UvrA subunits dissociate and the UvrB-DNA preincision complex is formed. This complex is subsequently bound by UvrC and the second UvrB is released. If no lesion is found, the DNA wraps around the other UvrB subunit that will check the other stand for damage. This chain is UvrABC system protein B, found in Halalkalibacterium halodurans (strain ATCC BAA-125 / DSM 18197 / FERM 7344 / JCM 9153 / C-125) (Bacillus halodurans).